Here is a 351-residue protein sequence, read N- to C-terminus: Probable dual-specificity RNA methyltransferase RlmN (351 aa).

E98 functions as the Proton acceptor in the catalytic mechanism. Residues 104–332 (TQKRLTVCVS…ASIRRSRGLD (229 aa)) form the Radical SAM core domain. An intrachain disulfide couples C111 to C337. 3 residues coordinate [4Fe-4S] cluster: C118, C122, and C125. S-adenosyl-L-methionine contacts are provided by residues 165–166 (GE), S195, 218–220 (SLH), and N294. Residue C337 is the S-methylcysteine intermediate of the active site.

Belongs to the radical SAM superfamily. RlmN family. It depends on [4Fe-4S] cluster as a cofactor.

The protein resides in the cytoplasm. It catalyses the reaction adenosine(2503) in 23S rRNA + 2 reduced [2Fe-2S]-[ferredoxin] + 2 S-adenosyl-L-methionine = 2-methyladenosine(2503) in 23S rRNA + 5'-deoxyadenosine + L-methionine + 2 oxidized [2Fe-2S]-[ferredoxin] + S-adenosyl-L-homocysteine. The catalysed reaction is adenosine(37) in tRNA + 2 reduced [2Fe-2S]-[ferredoxin] + 2 S-adenosyl-L-methionine = 2-methyladenosine(37) in tRNA + 5'-deoxyadenosine + L-methionine + 2 oxidized [2Fe-2S]-[ferredoxin] + S-adenosyl-L-homocysteine. Specifically methylates position 2 of adenine 2503 in 23S rRNA and position 2 of adenine 37 in tRNAs. This is Probable dual-specificity RNA methyltransferase RlmN from Acaryochloris marina (strain MBIC 11017).